The chain runs to 363 residues: Chorismate synthase (363 aa).

NADP(+) is bound by residues arginine 48 and arginine 54. FMN contacts are provided by residues 131-133 (RSS), 244-245 (NA), glycine 288, 303-307 (KPTSS), and arginine 329.

The protein belongs to the chorismate synthase family. Homotetramer. FMNH2 serves as cofactor.

It catalyses the reaction 5-O-(1-carboxyvinyl)-3-phosphoshikimate = chorismate + phosphate. The protein operates within metabolic intermediate biosynthesis; chorismate biosynthesis; chorismate from D-erythrose 4-phosphate and phosphoenolpyruvate: step 7/7. Its function is as follows. Catalyzes the anti-1,4-elimination of the C-3 phosphate and the C-6 proR hydrogen from 5-enolpyruvylshikimate-3-phosphate (EPSP) to yield chorismate, which is the branch point compound that serves as the starting substrate for the three terminal pathways of aromatic amino acid biosynthesis. This reaction introduces a second double bond into the aromatic ring system. In Maricaulis maris (strain MCS10) (Caulobacter maris), this protein is Chorismate synthase.